The sequence spans 106 residues: Iron-sulfur cluster assembly protein CyaY (106 aa).

The protein belongs to the frataxin family.

In terms of biological role, involved in iron-sulfur (Fe-S) cluster assembly. May act as a regulator of Fe-S biogenesis. The polypeptide is Iron-sulfur cluster assembly protein CyaY (Dickeya chrysanthemi (Pectobacterium chrysanthemi)).